A 297-amino-acid polypeptide reads, in one-letter code: Nucleotide-binding protein Bphyt_0592 (297 aa).

8-15 (GISGSGKS) serves as a coordination point for ATP. A GTP-binding site is contributed by 57 to 60 (DARS).

It belongs to the RapZ-like family.

Its function is as follows. Displays ATPase and GTPase activities. The sequence is that of Nucleotide-binding protein Bphyt_0592 from Paraburkholderia phytofirmans (strain DSM 17436 / LMG 22146 / PsJN) (Burkholderia phytofirmans).